A 216-amino-acid polypeptide reads, in one-letter code: Uracil phosphoribosyltransferase (216 aa).

GTP contacts are provided by residues arginine 32, arginine 41, 75–78 (MGKI), and lysine 77. At serine 82 the chain carries Phosphoserine. Residue arginine 85 coordinates 5-phospho-alpha-D-ribose 1-diphosphate. GTP is bound at residue arginine 102. Arginine 110 contacts 5-phospho-alpha-D-ribose 1-diphosphate. Arginine 131 provides a ligand contact to GTP. 5-phospho-alpha-D-ribose 1-diphosphate-binding positions include aspartate 137 and 137 to 145 (DPMLATGGS). Tyrosine 201 contacts D-ribose 5-phosphate. Residues leucine 202 and 207 to 209 (GDF) contribute to the uracil site. Aspartate 208 contacts 5-phospho-alpha-D-ribose 1-diphosphate.

The protein belongs to the UPRTase family. The cofactor is Mg(2+).

The enzyme catalyses UMP + diphosphate = 5-phospho-alpha-D-ribose 1-diphosphate + uracil. It participates in pyrimidine metabolism; UMP biosynthesis via salvage pathway; UMP from uracil: step 1/1. Its activity is regulated as follows. Allosterically activated by GTP. Its function is as follows. Catalyzes the conversion of uracil and 5-phospho-alpha-D-ribose 1-diphosphate (PRPP) to UMP and diphosphate in the pyrimidine salvage pathway. The polypeptide is Uracil phosphoribosyltransferase (FUR1) (Saccharomyces cerevisiae (strain ATCC 204508 / S288c) (Baker's yeast)).